Consider the following 81-residue polypeptide: MATSKSGGSSKNGRDSISKRLGVKRSGGQFVRSGEIIVRQRGTKFHKGKNSGLGRDHTIFALKDGVVEFKTSKGRKYINII.

A compositionally biased stretch (polar residues) spans 1 to 11 (MATSKSGGSSK). The segment at 1 to 26 (MATSKSGGSSKNGRDSISKRLGVKRS) is disordered.

The protein belongs to the bacterial ribosomal protein bL27 family.

The chain is Large ribosomal subunit protein bL27 from Borrelia turicatae (strain 91E135).